The following is a 214-amino-acid chain: Cytochrome c biogenesis ATP-binding export protein CcmA (214 aa).

One can recognise an ABC transporter domain in the interval 12–214; it reads LAARALAFSR…TRMLTLEAAA (203 aa). 44–51 provides a ligand contact to ATP; the sequence is GDNGAGKT.

Belongs to the ABC transporter superfamily. CcmA exporter (TC 3.A.1.107) family. In terms of assembly, the complex is composed of two ATP-binding proteins (CcmA) and two transmembrane proteins (CcmB).

The protein resides in the cell inner membrane. The catalysed reaction is heme b(in) + ATP + H2O = heme b(out) + ADP + phosphate + H(+). Part of the ABC transporter complex CcmAB involved in the biogenesis of c-type cytochromes; once thought to export heme, this seems not to be the case, but its exact role is uncertain. Responsible for energy coupling to the transport system. The polypeptide is Cytochrome c biogenesis ATP-binding export protein CcmA (Xanthomonas campestris pv. campestris (strain 8004)).